Here is a 402-residue protein sequence, read N- to C-terminus: Alkaline proteinase (402 aa).

The first 20 residues, 1-20 (MVTLRRLAVLLGAIPAALAA), serve as a signal peptide directing secretion. Positions 21-120 (PTTQKREVVP…EQDEGEFSTA (100 aa)) are excised as a propeptide. The region spanning 32 to 108 (KYIVTLKEGA…EVEEDQIWHL (77 aa)) is the Inhibitor I9 domain. A Peptidase S8 domain is found at 128–402 (AWGLGTISHR…NRILYNGNGA (275 aa)). Active-site charge relay system residues include D160, H191, and S347. Polar residues predominate over residues 382–392 (GRVSNPGSGSP). The disordered stretch occupies residues 382–402 (GRVSNPGSGSPNRILYNGNGA).

Belongs to the peptidase S8 family.

This chain is Alkaline proteinase (ALP), found in Hapsidospora chrysogena (Acremonium chrysogenum).